A 279-amino-acid chain; its full sequence is Proteasome subunit alpha type-1 (279 aa).

Y103 carries the phosphotyrosine modification. Residues 235–249 (HVAIAKENDNDTPRN) are compositionally biased toward basic and acidic residues. Positions 235–279 (HVAIAKENDNDTPRNDDDDDRPSPPEEPAAGPRDPEVLVATEQRP) are disordered.

This sequence belongs to the peptidase T1A family. In terms of assembly, the 26S proteasome consists of a 20S proteasome core and two 19S regulatory subunits. The 20S proteasome core is composed of 28 subunits that are arranged in four stacked rings, resulting in a barrel-shaped structure. The two end rings are each formed by seven alpha subunits, and the two central rings are each formed by seven beta subunits. The catalytic chamber with the active sites is on the inside of the barrel. Interacts with PI31.

It is found in the cytoplasm. The protein resides in the nucleus. Functionally, the proteasome is a multicatalytic proteinase complex which is characterized by its ability to cleave peptides with Arg, Phe, Tyr, Leu, and Glu adjacent to the leaving group at neutral or slightly basic pH. The proteasome has an ATP-dependent proteolytic activity. This chain is Proteasome subunit alpha type-1 (Prosalpha6), found in Drosophila melanogaster (Fruit fly).